The primary structure comprises 591 residues: Proteasome-associated ATPase (591 aa).

Residues 10–77 (VAAAEELHAL…LREEVDRLGQ (68 aa)) adopt a coiled-coil conformation. Residue 278–283 (GCGKTL) coordinates ATP. The docks into pockets in the proteasome alpha-ring stretch occupies residues 590–591 (YL).

Belongs to the AAA ATPase family. In terms of assembly, homohexamer. Assembles into a hexameric ring structure that likely caps the 20S proteasome core. Can form a complex composed of two stacked hexameric rings in vitro. Probably interacts with the prokaryotic ubiquitin-like protein Pup through a hydrophobic interface; the expected interacting region of ARC lies in its N-terminal coiled-coil domain. There is likely one Pup binding site per ARC hexamer ring. Upon ATP-binding, the C-terminus of ARC probably interacts with the alpha-rings of the proteasome core, possibly by binding to the intersubunit pockets.

Its pathway is protein degradation; proteasomal Pup-dependent pathway. Its activity is regulated as follows. ATPase activity is inhibited by N-ethylmaleimide (NEM) but not by sodium azide. Its function is as follows. ATPase which is responsible for recognizing, binding, unfolding and translocation of pupylated proteins into the bacterial 20S proteasome core particle. May be essential for opening the gate of the 20S proteasome via an interaction with its C-terminus, thereby allowing substrate entry and access to the site of proteolysis. Thus, the C-termini of the proteasomal ATPase may function like a 'key in a lock' to induce gate opening and therefore regulate proteolysis. The sequence is that of Proteasome-associated ATPase from Rhodococcus erythropolis (Arthrobacter picolinophilus).